Consider the following 522-residue polypeptide: E3 ubiquitin-protein ligase DMA2 (522 aa).

Disordered regions lie at residues 1–56 and 69–92; these read MYTP…RPAS and QNSQ…PSNS. Low complexity predominate over residues 14–35; the sequence is APTSSMTSNSSSASNANTTSSS. Positions 36–49 are enriched in polar residues; sequence GINPRNRASGTPSN. Residue Ser-206 is modified to Phosphoserine. Residues Lys-211, Lys-256, Lys-258, Lys-288, Lys-310, Lys-333, Lys-343, Lys-346, Lys-366, Lys-406, Lys-412, and Lys-423 each participate in a glycyl lysine isopeptide (Lys-Gly) (interchain with G-Cter in ubiquitin) cross-link. Residues 295–358 form the FHA domain; that stretch reads LVIGRYTERV…SGTFLNHQRL (64 aa). Residues 433–477 form an RING-type zinc finger; the sequence is CSICLCKIKPCQAIFISPCAHSWHFRCVRRLVMLSYPQFVCPNCR.

It belongs to the DMA1 family. Post-translationally, UBC4-dependent autoubiquitination occurs at Lys-211, Lys-258, Lys-288, Lys-310, Lys-333, Lys-343, Lys-346, Lys-366, Lys-406, Lys-412 and Lys-423. UBC4-dependent autoubiquitination is responsible for DMA2 turnover. UBC13/MMS2-dependent autoubiquitination occurs at Lys-258, Lys-310, Lys-346 and Lys-366. Lys-211, Lys-256, Lys-288, Lys-310, Lys-343, Lys-258, Lys-366 and Lys-412 are also ubiquitinated in trans by DMA1 E3 ligase in association with UBC4.

The protein resides in the cytoplasm. The enzyme catalyses S-ubiquitinyl-[E2 ubiquitin-conjugating enzyme]-L-cysteine + [acceptor protein]-L-lysine = [E2 ubiquitin-conjugating enzyme]-L-cysteine + N(6)-ubiquitinyl-[acceptor protein]-L-lysine.. In terms of biological role, E3 ubiquitin-protein ligase which functions in cell cycle retarding in conjunction with the UBC4 and UBC13/MMS2 complex, 2 E2 ubiquitin conjugating enzymes. Involved in nutritional control of the cell cycle. Required for proper spindle positioning, likely regulating septin ring deposition at the bud neck. This is E3 ubiquitin-protein ligase DMA2 (DMA2) from Saccharomyces cerevisiae (strain ATCC 204508 / S288c) (Baker's yeast).